Consider the following 132-residue polypeptide: Small ribosomal subunit protein eS24 (132 aa).

Over residues 90-100 the composition is skewed to basic and acidic residues; it reads RLAKHGLYEKK. The interval 90–132 is disordered; that stretch reads RLAKHGLYEKKKTSRKQRKERKNRMKKVRGTAKANVGAGKKKD. A compositionally biased stretch (basic residues) spans 101–119; it reads KTSRKQRKERKNRMKKVRG.

The protein belongs to the eukaryotic ribosomal protein eS24 family. Component of the small ribosomal subunit. Part of the small subunit (SSU) processome, composed of more than 70 proteins and the RNA chaperone small nucleolar RNA (snoRNA) U3.

The protein localises to the cytoplasm. It localises to the nucleus. It is found in the nucleolus. Functionally, component of the small ribosomal subunit. The ribosome is a large ribonucleoprotein complex responsible for the synthesis of proteins in the cell. Required for processing of pre-rRNA and maturation of 40S ribosomal subunits. Part of the small subunit (SSU) processome, first precursor of the small eukaryotic ribosomal subunit. During the assembly of the SSU processome in the nucleolus, many ribosome biogenesis factors, an RNA chaperone and ribosomal proteins associate with the nascent pre-rRNA and work in concert to generate RNA folding, modifications, rearrangements and cleavage as well as targeted degradation of pre-ribosomal RNA by the RNA exosome. In Xenopus laevis (African clawed frog), this protein is Small ribosomal subunit protein eS24 (rps24).